The sequence spans 1054 residues: Trehalose synthase complex regulatory subunit TPS3 (1054 aa).

Positions 112–133 (AANSGIPPANNPVSSGSTAQRP) are disordered. The segment covering 122-132 (NPVSSGSTAQR) has biased composition (polar residues). 3 positions are modified to phosphoserine: Ser148, Ser150, and Ser181. Disordered regions lie at residues 155–203 (ASSI…PVSK) and 223–250 (QQQA…SSSN). Residues 170–182 (LSSSLMKNPNLSF) show a composition bias toward polar residues. Residues 235-249 (SGSTAGDSSIASSSS) show a composition bias toward low complexity. Phosphothreonine is present on Thr265. Residues Ser267 and Ser273 each carry the phosphoserine modification. Residues 287–778 (KFGGYSNNAK…SNQETSTVFN (492 aa)) are glycosyltransferase. At Ser960 the chain carries Phosphoserine.

This sequence in the N-terminal section; belongs to the glycosyltransferase 20 family. In terms of assembly, the trehalose synthase complex is composed of the two catalytic subunits TPS1 and TPS2 and at least one of the two regulatory subunits TPS3 or TSL1.

Its subcellular location is the cytoplasm. In terms of biological role, regulatory subunit of the trehalose synthase complex that catalyzes the production of trehalose from glucose-6-phosphate and UDP-glucose in a two step process. May stabilize the trehalose synthase complex. The protein is Trehalose synthase complex regulatory subunit TPS3 (TPS3) of Saccharomyces cerevisiae (strain ATCC 204508 / S288c) (Baker's yeast).